We begin with the raw amino-acid sequence, 238 residues long: Ribosomal RNA small subunit methyltransferase G (238 aa).

S-adenosyl-L-methionine-binding positions include Gly-77, Phe-82, 128–129, and Arg-147; that span reads AE. The interval 219–238 is disordered; it reads KETPNKYPRKPGTPNKLPIE.

The protein belongs to the methyltransferase superfamily. RNA methyltransferase RsmG family.

The protein localises to the cytoplasm. Its function is as follows. Specifically methylates the N7 position of guanine in position 535 of 16S rRNA. This is Ribosomal RNA small subunit methyltransferase G from Listeria monocytogenes serovar 1/2a (strain ATCC BAA-679 / EGD-e).